We begin with the raw amino-acid sequence, 302 residues long: 4-hydroxy-tetrahydrodipicolinate synthase (302 aa).

Position 57 (Thr-57) interacts with pyruvate. Tyr-145 functions as the Proton donor/acceptor in the catalytic mechanism. Lys-173 serves as the catalytic Schiff-base intermediate with substrate. Residue Ile-213 participates in pyruvate binding.

Belongs to the DapA family. As to quaternary structure, homotetramer; dimer of dimers.

Its subcellular location is the cytoplasm. It catalyses the reaction L-aspartate 4-semialdehyde + pyruvate = (2S,4S)-4-hydroxy-2,3,4,5-tetrahydrodipicolinate + H2O + H(+). It participates in amino-acid biosynthesis; L-lysine biosynthesis via DAP pathway; (S)-tetrahydrodipicolinate from L-aspartate: step 3/4. Its function is as follows. Catalyzes the condensation of (S)-aspartate-beta-semialdehyde [(S)-ASA] and pyruvate to 4-hydroxy-tetrahydrodipicolinate (HTPA). The sequence is that of 4-hydroxy-tetrahydrodipicolinate synthase from Corynebacterium aurimucosum (strain ATCC 700975 / DSM 44827 / CIP 107346 / CN-1) (Corynebacterium nigricans).